A 223-amino-acid polypeptide reads, in one-letter code: Ribosomal RNA small subunit methyltransferase G (223 aa).

Residues G82, L87, 133-134, and R151 contribute to the S-adenosyl-L-methionine site; that span reads AE.

Belongs to the methyltransferase superfamily. RNA methyltransferase RsmG family.

The protein localises to the cytoplasm. In terms of biological role, specifically methylates the N7 position of guanine in position 518 of 16S rRNA. The sequence is that of Ribosomal RNA small subunit methyltransferase G from Corynebacterium glutamicum (strain R).